The chain runs to 371 residues: Diterpene cyclase DtcycA (371 aa).

Residues asparagine 234, serine 238, and glutamate 242 each contribute to the Mg(2+) site.

Belongs to the terpene synthase family. In terms of assembly, homodimer. Requires Mg(2+) as cofactor.

It catalyses the reaction (2E,6E,10E)-geranylgeranyl diphosphate = cembrene C + diphosphate. It carries out the reaction (2E,6E,10E)-geranylgeranyl diphosphate + H2O = (R)-nephthenol + diphosphate. Its function is as follows. Diterpene cyclases that can form multiple diterpene products. In Streptomyces sp, this protein is Diterpene cyclase DtcycA.